The sequence spans 829 residues: Periplasmic nitrate reductase (829 aa).

Residues 1-29 (MKMTRRAFVKANAAASAAAVAGVTLPATA) constitute a signal peptide (tat-type signal). The 57-residue stretch at 41–97 (ITWDKAPCRFCGTGCSVLVGTQNGKVVATQGDPEAPVNKGLNCIKGYFLSKIMYGKD) folds into the 4Fe-4S Mo/W bis-MGD-type domain. [4Fe-4S] cluster-binding residues include Cys-48, Cys-51, Cys-55, and Cys-83. Residues Lys-85, Gln-152, Asn-177, Cys-181, 214 to 221 (WGSNMAEM), 245 to 249 (STYYH), 264 to 266 (QSD), Met-374, Gln-378, Asn-484, 510 to 511 (SD), Lys-533, Asp-560, and 718 to 727 (TGRVLEHWHT) each bind Mo-bis(molybdopterin guanine dinucleotide). Position 794 (Phe-794) interacts with substrate. Asn-802 and Lys-819 together coordinate Mo-bis(molybdopterin guanine dinucleotide).

This sequence belongs to the prokaryotic molybdopterin-containing oxidoreductase family. NasA/NapA/NarB subfamily. Component of the periplasmic nitrate reductase NapAB complex composed of NapA and NapB. It depends on [4Fe-4S] cluster as a cofactor. Requires Mo-bis(molybdopterin guanine dinucleotide) as cofactor. Post-translationally, predicted to be exported by the Tat system. The position of the signal peptide cleavage has not been experimentally proven.

Its subcellular location is the periplasm. It carries out the reaction 2 Fe(II)-[cytochrome] + nitrate + 2 H(+) = 2 Fe(III)-[cytochrome] + nitrite + H2O. Its function is as follows. Catalytic subunit of the periplasmic nitrate reductase complex NapAB. Receives electrons from NapB and catalyzes the reduction of nitrate to nitrite. The polypeptide is Periplasmic nitrate reductase (Vibrio atlanticus (strain LGP32) (Vibrio splendidus (strain Mel32))).